The following is a 514-amino-acid chain: Flagellin B (514 aa).

It belongs to the bacterial flagellin family. As to quaternary structure, heteromer of FlaA and FlaB. FlaB is located proximal to the hook while the remainder of the filament is composed of the predominant FlaA.

The protein localises to the secreted. It localises to the bacterial flagellum. Flagellin is the subunit protein which polymerizes to form the filaments of bacterial flagella. Important for motility and virulence. The protein is Flagellin B (flaB) of Helicobacter pylori (strain J99 / ATCC 700824) (Campylobacter pylori J99).